The following is a 262-amino-acid chain: UPF0758 protein R01728 (262 aa).

Positions 23–44 (PEKRTRNSPATAPAPATDTHYH) are disordered. The segment covering 31–40 (PATAPAPATD) has biased composition (low complexity). An MPN domain is found at 140–262 (VLSSWSAVID…HVSLKGLRLF (123 aa)). The Zn(2+) site is built by His211, His213, and Asp224. The JAMM motif signature appears at 211–224 (HNHPSGDPTPSRAD).

It belongs to the UPF0758 family.

In Rhizobium meliloti (strain 1021) (Ensifer meliloti), this protein is UPF0758 protein R01728.